Here is a 585-residue protein sequence, read N- to C-terminus: Protein FAM13C (585 aa).

Disordered stretches follow at residues 26-45, 83-138, and 171-216; these read PVSL…ENNK, SMGN…NAFK, and EAAQ…APED. Composition is skewed to basic and acidic residues over residues 27–45 and 99–112; these read VSLH…ENNK and ESGR…ETEH. S131 is subject to Phosphoserine. Position 238 is a phosphoserine (S238). Disordered regions lie at residues 250–282, 349–391, and 441–477; these read FNLD…DGKE, EEQG…EETP, and IPTI…DHLT. Residues 262–275 are compositionally biased toward polar residues; it reads STQQFMMPRSSSRC. A phosphoserine mark is found at S385 and S386.

It belongs to the FAM13 family.

The sequence is that of Protein FAM13C (FAM13C) from Homo sapiens (Human).